We begin with the raw amino-acid sequence, 399 residues long: Transaminase BacF (399 aa).

Pyridoxal 5'-phosphate contacts are provided by residues 103-104 (GK), tyrosine 128, asparagine 178, tyrosine 209, and 236-238 (SFS). Lysine 239 bears the N6-(pyridoxal phosphate)lysine mark. Arginine 247 lines the pyridoxal 5'-phosphate pocket.

It belongs to the class-I pyridoxal-phosphate-dependent aminotransferase family. In terms of assembly, homodimer. Pyridoxal 5'-phosphate serves as cofactor.

It localises to the cytoplasm. The protein operates within antibiotic biosynthesis; bacilysin biosynthesis. Functionally, part of the bacABCDEF operon responsible for the biosynthesis of the nonribosomally synthesized dipeptide antibiotic bacilysin, composed of L-alanine and L-anticapsin. Bacilysin is an irreversible inactivator of the glutaminase domain of glucosamine synthetase. Catalyzes the reductive amination of the C2 ketone of tetrahydro-hydroxyphenylpyruvate (H4HPP), with L-Phe as an amino donor, to yield tetrahydrotyrosine (H4Tyr) diastereomer. D-Phe is not an effective amino donor. BacF associated to BacG converts 3E,7R- and 3Z,7R-ex-H2HPP to 2S,4R,7R- and 2S,4S,7R-H4Tyr, respectively. Given that bacilysin has the 2S,4S stereochemistry in its anticapsin moiety, it is likely that the 2S,4S-H4Tyr is the diastereomer used for the biosynthesis. The chain is Transaminase BacF from Bacillus subtilis (strain 168).